The following is a 179-amino-acid chain: Large ribosomal subunit protein uL6 (179 aa).

The tract at residues 151 to 179 is disordered; the sequence is RKPEPYKGKGIKYDNEQIRRKAGKSGGKK. A compositionally biased stretch (basic and acidic residues) spans 152–169; that stretch reads KPEPYKGKGIKYDNEQIR. Residues 170–179 show a composition bias toward basic residues; sequence RKAGKSGGKK.

This sequence belongs to the universal ribosomal protein uL6 family. As to quaternary structure, part of the 50S ribosomal subunit.

Its function is as follows. This protein binds to the 23S rRNA, and is important in its secondary structure. It is located near the subunit interface in the base of the L7/L12 stalk, and near the tRNA binding site of the peptidyltransferase center. This is Large ribosomal subunit protein uL6 from Nitratidesulfovibrio vulgaris (strain ATCC 29579 / DSM 644 / CCUG 34227 / NCIMB 8303 / VKM B-1760 / Hildenborough) (Desulfovibrio vulgaris).